The sequence spans 98 residues: Histone H4-like protein type G (98 aa).

Residues 17–21 (KCHRK) mediate DNA binding.

Belongs to the histone H4 family. The nucleosome is a histone octamer containing two molecules each of H2A, H2B, H3 and H4 assembled in one H3-H4 heterotetramer and two H2A-H2B heterodimers. The octamer wraps approximately 147 bp of DNA.

It is found in the nucleus. Its subcellular location is the chromosome. Its function is as follows. Core component of nucleosome. Nucleosomes wrap and compact DNA into chromatin, limiting DNA accessibility to the cellular machineries which require DNA as a template. Histones thereby play a central role in transcription regulation, DNA repair, DNA replication and chromosomal stability. DNA accessibility is regulated via a complex set of post-translational modifications of histones, also called histone code, and nucleosome remodeling. This chain is Histone H4-like protein type G, found in Homo sapiens (Human).